We begin with the raw amino-acid sequence, 101 residues long: Small ribosomal subunit protein uS14 (101 aa).

This sequence belongs to the universal ribosomal protein uS14 family. In terms of assembly, part of the 30S ribosomal subunit. Contacts proteins S3 and S10.

Functionally, binds 16S rRNA, required for the assembly of 30S particles and may also be responsible for determining the conformation of the 16S rRNA at the A site. The chain is Small ribosomal subunit protein uS14 from Vibrio vulnificus (strain CMCP6).